The sequence spans 175 residues: Ribosome-binding factor A (175 aa).

The interval lysine 131 to aspartate 175 is disordered. Residues leucine 162–aspartate 175 show a composition bias toward acidic residues.

It belongs to the RbfA family. In terms of assembly, monomer. Binds 30S ribosomal subunits, but not 50S ribosomal subunits or 70S ribosomes.

Its subcellular location is the cytoplasm. One of several proteins that assist in the late maturation steps of the functional core of the 30S ribosomal subunit. Associates with free 30S ribosomal subunits (but not with 30S subunits that are part of 70S ribosomes or polysomes). Required for efficient processing of 16S rRNA. May interact with the 5'-terminal helix region of 16S rRNA. The polypeptide is Ribosome-binding factor A (Mycobacterium ulcerans (strain Agy99)).